A 464-amino-acid polypeptide reads, in one-letter code: MNAAVLLLLLALAALPASCAPPRSFRLELASVDASAADAANLTEHELLRRAIQRSRYRLAGIGMARGEAASARKAVVAETPIMPAGGEYLVKLGIGTPPYKFTAAIDTASDLIWTQCQPCTGCYHQVDPMFNPRVSSTYAALPCSSDTCDELDVHRCGHDDDESCQYTYTYSGNATTEGTLAVDKLVIGEDAFRGVAFGCSTSSTGGAPPPQASGVVGLGRGPLSLVSQLSVRRFAYCLPPPASRIPGKLVLGADADAARNATNRIAVPMRRDPRYPSYYYLNLDGLLIGDRAMSLPPTTTTTATATATAPAPAPTPSPNATAVAVGDANRYGMIIDIASTITFLEASLYDELVNDLEVEIRLPRGTGSSLGLDLCFILPDGVAFDRVYVPAVALAFDGRWLRLDKARLFAEDRESGMMCLMVGRAEAGSVSILGNFQQQNMQVLYNLRRGRVTFVQSPCGALR.

A signal peptide spans 1–19 (MNAAVLLLLLALAALPASC). N-linked (GlcNAc...) asparagine glycosylation is present at Asn-41. The Peptidase A1 domain maps to 89 to 456 (YLVKLGIGTP…NLRRGRVTFV (368 aa)). Residue Asp-107 is part of the active site. Cys-117 and Cys-123 are oxidised to a cystine. N-linked (GlcNAc...) asparagine glycans are attached at residues Asn-174 and Asn-261. Residues 299–311 (TTTTTATATATAP) are compositionally biased toward low complexity. Residues 299-319 (TTTTTATATATAPAPAPTPSP) form a disordered region. A glycan (N-linked (GlcNAc...) asparagine) is linked at Asn-320. Asp-337 is a catalytic residue. A disulfide bridge links Cys-376 with Cys-420.

Belongs to the peptidase A1 family.

Its function is as follows. Anther-specific aspartic protease involved in tapetal programmed cell death (PCD). Directly regulated by the transcription factor EAT1/DTD in anthers during tapetum PCD and degeneration. The chain is Aspartyl protease 37 from Oryza sativa subsp. japonica (Rice).